Reading from the N-terminus, the 916-residue chain is Protein translocase subunit SecA (916 aa).

Residues glutamine 87, 105-109 (GEGKT), and aspartate 507 contribute to the ATP site. The Zn(2+) site is built by cysteine 900, cysteine 902, cysteine 911, and histidine 912.

The protein belongs to the SecA family. In terms of assembly, monomer and homodimer. Part of the essential Sec protein translocation apparatus which comprises SecA, SecYEG and auxiliary proteins SecDF-YajC and YidC. Zn(2+) is required as a cofactor.

The protein localises to the cell inner membrane. It localises to the cytoplasm. It carries out the reaction ATP + H2O + cellular proteinSide 1 = ADP + phosphate + cellular proteinSide 2.. Functionally, part of the Sec protein translocase complex. Interacts with the SecYEG preprotein conducting channel. Has a central role in coupling the hydrolysis of ATP to the transfer of proteins into and across the cell membrane, serving both as a receptor for the preprotein-SecB complex and as an ATP-driven molecular motor driving the stepwise translocation of polypeptide chains across the membrane. The sequence is that of Protein translocase subunit SecA from Neisseria gonorrhoeae (strain NCCP11945).